The sequence spans 350 residues: tRNA uridine(34) hydroxylase (350 aa).

The Rhodanese domain maps to Asp-146 to Leu-240. Cys-200 (cysteine persulfide intermediate) is an active-site residue.

The protein belongs to the TrhO family.

The enzyme catalyses uridine(34) in tRNA + AH2 + O2 = 5-hydroxyuridine(34) in tRNA + A + H2O. In terms of biological role, catalyzes oxygen-dependent 5-hydroxyuridine (ho5U) modification at position 34 in tRNAs. The polypeptide is tRNA uridine(34) hydroxylase (Shigella sonnei (strain Ss046)).